A 154-amino-acid polypeptide reads, in one-letter code: Myoglobin (154 aa).

The region spanning 2-148 (GLSDGEWQIV…FRNDIAAKYK (147 aa)) is the Globin domain. Serine 4 is modified (phosphoserine). Position 65 (histidine 65) interacts with nitrite. Residue histidine 65 participates in O2 binding. At threonine 68 the chain carries Phosphothreonine. Histidine 94 contacts heme b.

It belongs to the globin family. Monomeric.

Its subcellular location is the cytoplasm. It localises to the sarcoplasm. It catalyses the reaction Fe(III)-heme b-[protein] + nitric oxide + H2O = Fe(II)-heme b-[protein] + nitrite + 2 H(+). The catalysed reaction is H2O2 + AH2 = A + 2 H2O. In terms of biological role, monomeric heme protein which primary function is to store oxygen and facilitate its diffusion within muscle tissues. Reversibly binds oxygen through a pentacoordinated heme iron and enables its timely and efficient release as needed during periods of heightened demand. Depending on the oxidative conditions of tissues and cells, and in addition to its ability to bind oxygen, it also has a nitrite reductase activity whereby it regulates the production of bioactive nitric oxide. Under stress conditions, like hypoxia and anoxia, it also protects cells against reactive oxygen species thanks to its pseudoperoxidase activity. This is Myoglobin (MB) from Canis lupus familiaris (Dog).